Consider the following 369-residue polypeptide: NAD(P)H-quinone oxidoreductase subunit 1, chloroplastic (369 aa).

Transmembrane regions (helical) follow at residues 25-45 (FGFI…TIGI), 104-124 (VMVV…HGII), 130-150 (IGVF…LTAG), 270-290 (LSAT…LFLP), and 306-326 (VISI…FLFI).

It belongs to the complex I subunit 1 family. In terms of assembly, NDH is composed of at least 16 different subunits, 5 of which are encoded in the nucleus.

The protein localises to the plastid. It localises to the chloroplast thylakoid membrane. The catalysed reaction is a plastoquinone + NADH + (n+1) H(+)(in) = a plastoquinol + NAD(+) + n H(+)(out). It carries out the reaction a plastoquinone + NADPH + (n+1) H(+)(in) = a plastoquinol + NADP(+) + n H(+)(out). Functionally, NDH shuttles electrons from NAD(P)H:plastoquinone, via FMN and iron-sulfur (Fe-S) centers, to quinones in the photosynthetic chain and possibly in a chloroplast respiratory chain. The immediate electron acceptor for the enzyme in this species is believed to be plastoquinone. Couples the redox reaction to proton translocation, and thus conserves the redox energy in a proton gradient. This Huperzia lucidula (Shining clubmoss) protein is NAD(P)H-quinone oxidoreductase subunit 1, chloroplastic.